A 154-amino-acid polypeptide reads, in one-letter code: MAKNRVEKITERLVMPIIQNENFELVDLEYKKEGSNWYLRIYIDKPGGITLDDCQKVSEQLGEELDREDPISENYFLEVSSPGLDRPLKKDSDFIRFAGEIVEVKLYEALNGNKVIEGELVGLEENMIKINVANVGLLELPKEKVALTRLAVKF.

This sequence belongs to the RimP family.

It localises to the cytoplasm. Required for maturation of 30S ribosomal subunits. This Alkaliphilus oremlandii (strain OhILAs) (Clostridium oremlandii (strain OhILAs)) protein is Ribosome maturation factor RimP.